The sequence spans 103 residues: Large ribosomal subunit protein uL24 (103 aa).

The protein belongs to the universal ribosomal protein uL24 family. Part of the 50S ribosomal subunit.

One of two assembly initiator proteins, it binds directly to the 5'-end of the 23S rRNA, where it nucleates assembly of the 50S subunit. In terms of biological role, one of the proteins that surrounds the polypeptide exit tunnel on the outside of the subunit. This chain is Large ribosomal subunit protein uL24, found in Ruthia magnifica subsp. Calyptogena magnifica.